A 171-amino-acid polypeptide reads, in one-letter code: Ribosome maturation factor RimM (171 aa).

In terms of domain architecture, PRC barrel spans 96–169 (EGEFFIADMI…KMIIDPIKGM (74 aa)).

The protein belongs to the RimM family. As to quaternary structure, binds ribosomal protein uS19.

The protein resides in the cytoplasm. Its function is as follows. An accessory protein needed during the final step in the assembly of 30S ribosomal subunit, possibly for assembly of the head region. Essential for efficient processing of 16S rRNA. May be needed both before and after RbfA during the maturation of 16S rRNA. It has affinity for free ribosomal 30S subunits but not for 70S ribosomes. The chain is Ribosome maturation factor RimM from Clostridioides difficile (strain 630) (Peptoclostridium difficile).